The primary structure comprises 432 residues: MSELKDCPLQFHDFKSVDHVKLCPRYTAVLSRSEDDGIGIEELDTLQLELETLLSSASRRLRVLEAETQILTDWQDKKGDRRFLKLGKEHELGTPIKHSKPKKQKLDGKGSHASGPGPGRPKSRIMQQKMQEYEFTDDPVDVPRIPKNDAPNRFWASVEPYCADITNDEIKVLEDLLKTPEDEADYYKIPPLGKHYSQRWAQEDLLEEQKDGARAALSGDKKKGILGPLAELDSKDVDSLLKKSESQHDQPEDGCPFGHLTQRLLQALVEENIISPVEDSPIPEISGKESGTDGASTSPRSQNKPFSAPHTKSLEVRIKEELISQGLLESDDRPADDSEDEVLAELRKRQAELKALSAHNRAKKQELLRLAKEEMNRQELRQRVRMADNEVMDAFRKIMAARQKKRTPTKKEKDQAWKALKERESILKLLDG.

Disordered regions lie at residues 90-124 (HELGTPIKHSKPKKQKLDGKGSHASGPGPGRPKSR) and 275-315 (SPVE…KSLE). Polar residues predominate over residues 293-305 (DGASTSPRSQNKP). Residues 335–398 (ADDSEDEVLA…NEVMDAFRKI (64 aa)) are a coiled coil.

This sequence belongs to the NGG1 family.

It is found in the nucleus. Functionally, functions as a component of the PCAF complex. The PCAF complex is capable of efficiently acetylating histones in a nucleosomal context. The protein is Transcriptional adapter 3-B (tada3-b) of Xenopus laevis (African clawed frog).